A 753-amino-acid chain; its full sequence is CCR4-NOT transcription complex subunit 3 (753 aa).

Residues 240 to 534 form a disordered region; sequence ATSPPSHSHM…PPQFSTAPEI (295 aa). Residues 257–268 are compositionally biased toward low complexity; the sequence is SSSTPTSTTSSS. The segment covering 284–293 has biased composition (basic and acidic residues); that stretch reads DDKKRGRSTD. The residue at position 292 (Thr292) is a Phosphothreonine. A compositionally biased stretch (polar residues) spans 294-315; it reads SEVSQSPAKNGSKPVHSNQHPQ. Position 299 is a phosphoserine (Ser299). Over residues 317-330 the composition is skewed to pro residues; sequence PAVPPTYPSGPPPA. Residues 350–376 are compositionally biased toward low complexity; it reads PSALGPKASPAPSHNSGTPAPYAQAVA. Over residues 396–408 the composition is skewed to gly residues; the sequence is SGGGGGGSGGGGS. Over residues 424–433 the composition is skewed to polar residues; that stretch reads NGATSYSSVV. The segment covering 441–457 has biased composition (low complexity); the sequence is ALSSSGGNNASSQALGP. Pro residues predominate over residues 458-467; sequence PSGPHNPPPS. The segment covering 479 to 491 has biased composition (gly residues); the sequence is GAGGVAPGSGNNS. Ser542 bears the Phosphoserine mark. Residues 661 to 753 are repressor domain; sequence EFYQRLSTET…YRYLEDRDLQ (93 aa).

Belongs to the CNOT2/3/5 family. Component of the CCR4-NOT complex; distinct complexes seem to exist that differ in the participation of probably mutually exclusive catalytic subunits. In the complex interacts directly with CNOT2. Interacts with TIP120B and NANOS2. Interacts with EBF1. Interacts in an RNA-independent manner with BICC1 (via KH domains). As to expression, ubiquitous. Highly expressed in brain, heart, thymus, spleen, kidney, liver, small intestine, lung and peripheral blood leukocytes.

It is found in the cytoplasm. The protein resides in the nucleus. It localises to the P-body. Its function is as follows. Component of the CCR4-NOT complex which is one of the major cellular mRNA deadenylases and is linked to various cellular processes including bulk mRNA degradation, miRNA-mediated repression, translational repression during translational initiation and general transcription regulation. Additional complex functions may be a consequence of its influence on mRNA expression. May be involved in metabolic regulation; may be involved in recruitment of the CCR4-NOT complex to deadenylation target mRNAs involved in energy metabolism. Involved in mitotic progression and regulation of the spindle assembly checkpoint by regulating the stability of MAD1L1 mRNA. Can repress transcription and may link the CCR4-NOT complex to transcriptional regulation; the repressive function may involve histone deacetylases. Involved in the maintenance of embryonic stem (ES) cell identity. This is CCR4-NOT transcription complex subunit 3 from Homo sapiens (Human).